Here is a 460-residue protein sequence, read N- to C-terminus: Bifunctional protein GlmU (460 aa).

Residues 1–235 (MALSAAIVLA…PLTVEGVNDR (235 aa)) form a pyrophosphorylase region. Residues 9–12 (LAAG), Lys-23, Gln-76, and 81–82 (GT) contribute to the UDP-N-acetyl-alpha-D-glucosamine site. Asp-109 lines the Mg(2+) pocket. UDP-N-acetyl-alpha-D-glucosamine is bound by residues Gly-146, Glu-161, Asn-176, and Asn-233. Asn-233 serves as a coordination point for Mg(2+). The linker stretch occupies residues 236 to 256 (VQLAALSKTYNRRVCERWMRD). Residues 257–460 (GVTILDPETT…VEGWKPAWER (204 aa)) are N-acetyltransferase. UDP-N-acetyl-alpha-D-glucosamine-binding residues include Arg-338 and Lys-356. The active-site Proton acceptor is the His-368. Residues Tyr-371 and Asn-382 each contribute to the UDP-N-acetyl-alpha-D-glucosamine site. Acetyl-CoA is bound by residues 391–392 (NY) and Ala-428.

It in the N-terminal section; belongs to the N-acetylglucosamine-1-phosphate uridyltransferase family. The protein in the C-terminal section; belongs to the transferase hexapeptide repeat family. Homotrimer. Requires Mg(2+) as cofactor.

It localises to the cytoplasm. It carries out the reaction alpha-D-glucosamine 1-phosphate + acetyl-CoA = N-acetyl-alpha-D-glucosamine 1-phosphate + CoA + H(+). The catalysed reaction is N-acetyl-alpha-D-glucosamine 1-phosphate + UTP + H(+) = UDP-N-acetyl-alpha-D-glucosamine + diphosphate. It functions in the pathway nucleotide-sugar biosynthesis; UDP-N-acetyl-alpha-D-glucosamine biosynthesis; N-acetyl-alpha-D-glucosamine 1-phosphate from alpha-D-glucosamine 6-phosphate (route II): step 2/2. Its pathway is nucleotide-sugar biosynthesis; UDP-N-acetyl-alpha-D-glucosamine biosynthesis; UDP-N-acetyl-alpha-D-glucosamine from N-acetyl-alpha-D-glucosamine 1-phosphate: step 1/1. The protein operates within bacterial outer membrane biogenesis; LPS lipid A biosynthesis. Catalyzes the last two sequential reactions in the de novo biosynthetic pathway for UDP-N-acetylglucosamine (UDP-GlcNAc). The C-terminal domain catalyzes the transfer of acetyl group from acetyl coenzyme A to glucosamine-1-phosphate (GlcN-1-P) to produce N-acetylglucosamine-1-phosphate (GlcNAc-1-P), which is converted into UDP-GlcNAc by the transfer of uridine 5-monophosphate (from uridine 5-triphosphate), a reaction catalyzed by the N-terminal domain. This Bifidobacterium longum (strain NCC 2705) protein is Bifunctional protein GlmU.